The sequence spans 377 residues: Sodium-dependent organic anion transporter (377 aa).

The Extracellular segment spans residues 1–29; sequence MRANCSSGLACPANSSEEELPEGLKAFGN. A glycan (N-linked (GlcNAc...) asparagine) is linked at N4. The chain crosses the membrane as a helical span at residues 30 to 50; sequence LDLVFTVVSALMIGLLMFSLG. At 51–67 the chain is on the cytoplasmic side; it reads CSVEVQKLWGHIRRPWG. The helical transmembrane segment at 68–88 threads the bilayer; it reads IAVGMLCQFGLMPLIAYLLII. Residues 89–97 are Extracellular-facing; the sequence is SFSLKPLQA. The helical transmembrane segment at 98 to 118 threads the bilayer; sequence IAVLIMGCCPGGTVSNIFTFW. Over 119-133 the chain is Cytoplasmic; the sequence is VDGDMDLSISMTTCS. Residues 134–154 form a helical membrane-spanning segment; sequence TMAALGMMPLCLYLYTLSWNL. Residues 155 to 159 lie on the Extracellular side of the membrane; sequence EQNLT. A glycan (N-linked (GlcNAc...) asparagine) is linked at N157. The helical transmembrane segment at 160 to 180 threads the bilayer; sequence IPYQNIGITLVCLIIPVAFGI. Topologically, residues 181 to 195 are cytoplasmic; that stretch reads YVNYRWPKQSKIILK. Residues 196–216 form a helical membrane-spanning segment; the sequence is IGAIAGGLLFLVVTGAGMVLM. Topologically, residues 217 to 223 are extracellular; that stretch reads KEFWSSD. Residues 224–244 traverse the membrane as a helical segment; it reads IILLMISFIFPLIGHATGFLL. Residues 245 to 257 are Cytoplasmic-facing; that stretch reads ALLTHQSWQRCRT. A helical transmembrane segment spans residues 258-278; sequence ISLETGTQNVQMCFTMLQLSF. The Extracellular segment spans residues 279–285; sequence TAEQLVQ. The chain crosses the membrane as a helical span at residues 286-306; the sequence is IFGFVLAYGLFQMLNGFFMVA. Over 307–377 the chain is Cytoplasmic; that stretch reads AYKMYKRRLK…TPTGDIARAK (71 aa). A disordered region spans residues 319–377; that stretch reads HGNEKPSCQEARHRKKSTSPKETTAFLEVNEEATLSPGPSGPVDPHGAPTPTGDIARAK.

Belongs to the bile acid:sodium symporter (BASS) (TC 2.A.28) family. In terms of processing, glycosylated.

The protein localises to the membrane. It carries out the reaction estrone 3-sulfate(out) + 2 Na(+)(out) = estrone 3-sulfate(in) + 2 Na(+)(in). The enzyme catalyses 17beta-estradiol 3-sulfate(out) + 2 Na(+)(out) = 17beta-estradiol 3-sulfate(in) + 2 Na(+)(in). It catalyses the reaction dehydroepiandrosterone 3-sulfate(out) + 2 Na(+)(out) = dehydroepiandrosterone 3-sulfate(in) + 2 Na(+)(in). The catalysed reaction is androst-5-ene-diol 3-sulfate(out) + 2 Na(+)(out) = androst-5-ene-diol 3-sulfate(in) + 2 Na(+)(in). It carries out the reaction pregnenolone sulfate(out) + 2 Na(+)(out) = pregnenolone sulfate(in) + 2 Na(+)(in). The enzyme catalyses taurolithocholate 3-sulfate(out) + 2 Na(+)(out) = taurolithocholate 3-sulfate(in) + 2 Na(+)(in). It catalyses the reaction androsterone 3alpha-sulfate(out) + 2 Na(+)(out) = androsterone 3alpha-sulfate(in) + 2 Na(+)(in). The catalysed reaction is 5alpha-dihydrotestosterone sulfate(out) + 2 Na(+)(out) = 5alpha-dihydrotestosterone sulfate(in) + 2 Na(+)(in). It carries out the reaction 17beta-estradiol 17-sulfate(out) + 2 Na(+)(out) = 17beta-estradiol 17-sulfate(in) + 2 Na(+)(in). The enzyme catalyses 17alpha-hydroxypregnenolone 3-sulfate(out) + 2 Na(+)(out) = 17alpha-hydroxypregnenolone 3-sulfate(in) + 2 Na(+)(in). It catalyses the reaction epiandrosterone 3-sulfate(out) + 2 Na(+)(out) = epiandrosterone 3-sulfate(in) + 2 Na(+)(in). The catalysed reaction is epitestosterone 17-sulfate(out) + 2 Na(+)(out) = epitestosterone 17-sulfate(in) + 2 Na(+)(in). It carries out the reaction testosterone 17-sulfate(out) + 2 Na(+)(out) = testosterone 17-sulfate(in) + 2 Na(+)(in). The enzyme catalyses 16alpha-hydroxydehydroepiandrosterone 3-sulfate(out) + 2 Na(+)(out) = 16alpha-hydroxydehydroepiandrosterone 3-sulfate(in) + 2 Na(+)(in). Its function is as follows. Transports sulfoconjugated steroid hormones from the extracellular compartment into the cytosol in a sodium-dependent manner without hydrolysis. Steroid sulfate hormones are commonly considered to be biologically inactive metabolites, that may be activated by steroid sulfatases into free steroids. May play an important role by delivering sulfoconjugated steroids to specific target cells in reproductive organs. May play a role transporting the estriol precursor 16alpha-hydroxydehydroepiandrosterone 3-sulfate (16a-OH-DHEAS) at the fetal blood vessel endothelium. Can also transport other sulfoconjugated molecules such as taurolithocholic acid-3-sulfate and sulfoconjugated pyrenes. In Bos taurus (Bovine), this protein is Sodium-dependent organic anion transporter (SLC10A6).